The chain runs to 443 residues: ATP-dependent protease ATPase subunit HslU (443 aa).

ATP is bound by residues isoleucine 18 and 60-65 (GVGKTE). Residues 138–158 (PAENQWGEKEQNEDKGTRQTF) are disordered. The segment covering 143–154 (WGEKEQNEDKGT) has biased composition (basic and acidic residues). ATP is bound by residues aspartate 255, glutamate 321, and arginine 393.

The protein belongs to the ClpX chaperone family. HslU subfamily. A double ring-shaped homohexamer of HslV is capped on each side by a ring-shaped HslU homohexamer. The assembly of the HslU/HslV complex is dependent on binding of ATP.

Its subcellular location is the cytoplasm. In terms of biological role, ATPase subunit of a proteasome-like degradation complex; this subunit has chaperone activity. The binding of ATP and its subsequent hydrolysis by HslU are essential for unfolding of protein substrates subsequently hydrolyzed by HslV. HslU recognizes the N-terminal part of its protein substrates and unfolds these before they are guided to HslV for hydrolysis. The polypeptide is ATP-dependent protease ATPase subunit HslU (Pseudoalteromonas atlantica (strain T6c / ATCC BAA-1087)).